We begin with the raw amino-acid sequence, 112 residues long: MAQGYAWFCCASNSSTRFSNATNFSRVRINTCVCTSNSSRVTKSSFANCACNVCLSLASASCPKSLIPCGRESWICCITCSIFFGFSIIASYFLKFHLLYVILLQIKTFFRD.

A helical transmembrane segment spans residues 82 to 104 (IFFGFSIIASYFLKFHLLYVILL).

The protein resides in the membrane. This is an uncharacterized protein from Pasteurella multocida (strain Pm70).